Consider the following 37-residue polypeptide: ATDLQAGYVADSNFTEAWKKVVPNVDPPKTPSAFMXP.

The protein belongs to the ATPase delta chain family. F-type ATPases have 2 components, CF(1) - the catalytic core - and CF(0) - the membrane proton channel. CF(1) has five subunits: alpha(3), beta(3), gamma(1), delta(1), epsilon(1). CF(0) has three main subunits: a, b and c.

It localises to the mitochondrion. It is found in the mitochondrion inner membrane. Mitochondrial membrane ATP synthase (F(1)F(0) ATP synthase or Complex V) produces ATP from ADP in the presence of a proton gradient across the membrane which is generated by electron transport complexes of the respiratory chain. F-type ATPases consist of two structural domains, F(1) - containing the extramembraneous catalytic core and F(0) - containing the membrane proton channel, linked together by a central stalk and a peripheral stalk. During catalysis, ATP synthesis in the catalytic domain of F(1) is coupled via a rotary mechanism of the central stalk subunits to proton translocation. Part of the complex F(0) domain and the peripheric stalk, which acts as a stator to hold the catalytic alpha(3)beta(3) subcomplex and subunit a/ATP6 static relative to the rotary elements. This is ATP synthase subunit O, mitochondrial from Solanum tuberosum (Potato).